A 174-amino-acid chain; its full sequence is Methylated-DNA--protein-cysteine methyltransferase (174 aa).

The active-site Nucleophile; methyl group acceptor is Cys141.

This sequence belongs to the MGMT family.

It localises to the cytoplasm. It catalyses the reaction a 6-O-methyl-2'-deoxyguanosine in DNA + L-cysteinyl-[protein] = S-methyl-L-cysteinyl-[protein] + a 2'-deoxyguanosine in DNA. The enzyme catalyses a 4-O-methyl-thymidine in DNA + L-cysteinyl-[protein] = a thymidine in DNA + S-methyl-L-cysteinyl-[protein]. Its function is as follows. Involved in the cellular defense against the biological effects of O6-methylguanine (O6-MeG) and O4-methylthymine (O4-MeT) in DNA. Repairs the methylated nucleobase in DNA by stoichiometrically transferring the methyl group to a cysteine residue in the enzyme. This is a suicide reaction: the enzyme is irreversibly inactivated. This is Methylated-DNA--protein-cysteine methyltransferase from Thermococcus kodakarensis (strain ATCC BAA-918 / JCM 12380 / KOD1) (Pyrococcus kodakaraensis (strain KOD1)).